Here is a 479-residue protein sequence, read N- to C-terminus: NAC domain-containing protein 45 (479 aa).

Residues 6–157 (LPPGFRFHPT…AYALCRVFKK (152 aa)) form the NAC domain. Residues 105-163 (IGTKKTLVYYRGRAPHGIRTGWVMHEYRLDETECEPSAYGMQDAYALCRVFKKIVIEAK) mediate DNA binding.

In terms of tissue distribution, expressed in a few sieve element cells before enucleation and in phloem-pole pericycle cells.

The protein localises to the nucleus. In terms of biological role, transcription factor directing sieve element enucleation and cytosol degradation. Not required for formation of lytic vacuoles. Regulates, with NAC086, the transcription of NEN1, NEN2, NEN3, NEN4, RTM1, RTM2, UBP16, PLDZETA, ABCB10 and At1g26450. The polypeptide is NAC domain-containing protein 45 (Arabidopsis thaliana (Mouse-ear cress)).